Reading from the N-terminus, the 55-residue chain is Antiviral protein GAP-31 (55 aa).

Residues 29 to 55 (KPEGNSHGIPSLRKSSDDPGSSFVVAG) form a disordered region.

Belongs to the ribosome-inactivating protein family. Type 1 RIP subfamily.

It carries out the reaction Endohydrolysis of the N-glycosidic bond at one specific adenosine on the 28S rRNA.. Its function is as follows. Single-chain ribosome-inactivating protein, possessing high antiviral potency and low toxicity to normal cells in culture and to intact animals. Capable of inhibiting HIV-1 infection and replication. This chain is Antiviral protein GAP-31, found in Suregada multiflora (False lime).